Here is an 80-residue protein sequence, read N- to C-terminus: Iota-conotoxin-like r11c (80 aa).

An N-terminal signal peptide occupies residues 1–19; the sequence is MKLCLTFLLVLMILASVTG. Residues 20-35 constitute a propeptide that is removed on maturation; that stretch reads EKSSKHTLSRAARVKN. Pro38 and Pro47 each carry 4-hydroxyproline; partial. Disulfide bonds link Cys41/Cys55, Cys48/Cys58, Cys54/Cys63, and Cys57/Cys72. Pro65 is subject to 4-hydroxyproline. D-leucine is present on Leu78. Position 80 (Arg80) is a propeptide, removed by a carboxypeptidase.

The natural D-Leu form of the peptide is more potent than the synthetic L-Leu form. In terms of tissue distribution, expressed by the venom duct.

Its subcellular location is the secreted. Iota-conotoxins bind to voltage-gated sodium channels (Nav) and act as agonists by shifting the voltage-dependence of activation to more hyperpolarized levels. Causes circular motion, convulsions, copious urination, rigid paralysis and death upon intracranial injection into mice. Causes unbalanced swimming, swimming in diagonal and vertical motion and death, when injected intraperitoneally into goldfish. L-Leu and D-Leu forms are active on both nerve and muscle. In Conus radiatus (Rayed cone), this protein is Iota-conotoxin-like r11c.